The chain runs to 485 residues: NADH-quinone oxidoreductase subunit N (485 aa).

Transmembrane regions (helical) follow at residues 8-28, 35-55, 71-91, 105-125, 127-147, 159-179, 203-223, 235-255, 271-291, 297-317, 326-346, 373-393, 408-430, and 455-475; these read LIALLPLLIVGLTVVVVMLSI, FLNATLSVIGLNAALVSLWFV, GFAMLYTGLVQVASLATCTFA, FYLLVLIASLGGILLANANHL, ALFLGIELISLPLFGLIGYAF, YTILSAAASSFLLFGMALVYA, LLAGFGLMIVGLGFKLSLVPF, PAPVSTFLATASKIAIFGVVM, VVLGIIAFASIIFGNLMALSQ, LLGYSSISHLGYLLVALIALQ, VGVYLAGYLFSSLGAFGVVSL, AAVMTVMMLSLAGIPMTLGFI, WWLVAAVVVGSAIGLYYYLRVAV, and IVVLISALLVLVLGVWPQPLI.

The protein belongs to the complex I subunit 2 family. In terms of assembly, NDH-1 is composed of 13 different subunits. Subunits NuoA, H, J, K, L, M, N constitute the membrane sector of the complex.

It is found in the cell inner membrane. The enzyme catalyses a quinone + NADH + 5 H(+)(in) = a quinol + NAD(+) + 4 H(+)(out). In terms of biological role, NDH-1 shuttles electrons from NADH, via FMN and iron-sulfur (Fe-S) centers, to quinones in the respiratory chain. The immediate electron acceptor for the enzyme in this species is believed to be ubiquinone. Couples the redox reaction to proton translocation (for every two electrons transferred, four hydrogen ions are translocated across the cytoplasmic membrane), and thus conserves the redox energy in a proton gradient. The protein is NADH-quinone oxidoreductase subunit N of Salmonella gallinarum (strain 287/91 / NCTC 13346).